The following is a 122-amino-acid chain: Glycine cleavage system H protein (122 aa).

The Lipoyl-binding domain maps to 22–103 (IGIIGISDYA…AFGSWFFKVE (82 aa)). N6-lipoyllysine is present on K63.

It belongs to the GcvH family. The glycine cleavage system is composed of four proteins: P, T, L and H. The cofactor is (R)-lipoate.

The glycine cleavage system catalyzes the degradation of glycine. The H protein shuttles the methylamine group of glycine from the P protein to the T protein. In Treponema denticola (strain ATCC 35405 / DSM 14222 / CIP 103919 / JCM 8153 / KCTC 15104), this protein is Glycine cleavage system H protein.